The following is a 1846-amino-acid chain: Brefeldin A-inhibited guanine nucleotide-exchange protein 1 (1846 aa).

A DCB; DCB:DCB domain and DCB:HUS domain interaction region spans residues 2–224 (YEGKKTKNMF…QEAKQMERER (223 aa)). Ser-52 carries the post-translational modification Phosphoserine. Disordered regions lie at residues 217–248 (AKQM…HLRY), 264–302 (DLDP…DQAT), and 347–410 (VSAS…SPGA). Over residues 267–277 (PQTHDVDKSLQ) the composition is skewed to basic and acidic residues. 5 positions are modified to phosphoserine: Ser-286, Ser-289, Ser-290, Ser-394, and Ser-407. Residues 391-406 (SVSSNDTQESGNSSGP) are compositionally biased toward polar residues. An HUS; DCB:HUS domain interaction region spans residues 554-574 (ADAQSVVDIYVNYDCDLNAAN). The interval 631-684 (PNSQTTLGQEKPSEQEISEIKHPETINRYGSLNSLESTSSSGIGSYSTQMSGTD) is disordered. The span at 641–655 (KPSEQEISEIKHPET) shows a compositional bias: basic and acidic residues. Over residues 661–681 (SLNSLESTSSSGIGSYSTQMS) the composition is skewed to low complexity. In terms of domain architecture, SEC7 spans 688-877 (QFEVLKQQKE…SAIYNEIAGK (190 aa)). The Nuclear localization signal (NLS) motif lies at 708–712 (KKPKR). 3 positions are modified to phosphoserine: Ser-1076, Ser-1563, and Ser-1566. Residues 1571 to 1600 (DSAQPRSSDNRQQAPLVSVSPASEEVSKGR) form a disordered region. The segment covering 1574–1585 (QPRSSDNRQQAP) has biased composition (polar residues).

In terms of assembly, homodimer. Interacts with ARFGEF2/BIG2; both proteins are probably part of the same or very similar macromolecular complexes. Interacts with FKBP2. Interacts with MYO9B. Interacts with PRKAR1A and PRKAR2A. Interacts with PPP1CC. Interacts with NCL, FBL, NUP62 and U3 small nucleolar RNA. Interacts with DPY30. Interacts with PDE3A. Interacts with KANK1. Interacts with TBC1D22A and TBC1D22B. Post-translationally, phosphorylated. In vitro phosphorylated by PKA reducing its GEF activity and dephosphorylated by phosphatase PP1.

Its subcellular location is the cytoplasm. It is found in the perinuclear region. The protein localises to the golgi apparatus. The protein resides in the trans-Golgi network. It localises to the nucleus. Its subcellular location is the nucleolus. It is found in the nucleus matrix. The protein localises to the membrane. With respect to regulation, inhibited by brefeldin A. Promotes guanine-nucleotide exchange on ARF1 and ARF3. Promotes the activation of ARF1/ARF3 through replacement of GDP with GTP. Involved in vesicular trafficking. Required for the maintenance of Golgi structure; the function may be independent of its GEF activity. Required for the maturation of integrin beta-1 in the Golgi. Involved in the establishment and persistence of cell polarity during directed cell movement in wound healing. Proposed to act as A kinase-anchoring protein (AKAP) and may mediate crosstalk between Arf and PKA pathways. Inhibits GAP activity of MYO9B probably through competitive RhoA binding. The function in the nucleus remains to be determined. In Rattus norvegicus (Rat), this protein is Brefeldin A-inhibited guanine nucleotide-exchange protein 1 (Arfgef1).